The primary structure comprises 496 residues: Genome polyprotein (496 aa).

Residues Ser-1 to Ser-447 are Extracellular-facing. Cystine bridges form between Cys-3–Cys-30, Cys-60–Cys-116, Cys-60–Cys-121, Cys-74–Cys-105, Cys-92–Cys-116, and Cys-92–Cys-121. Residues Asp-98 to Gly-111 are fusion peptide. N-linked (GlcNAc...) asparagine; by host glycosylation is present at Asn-154. 2 cysteine pairs are disulfide-bonded: Cys-186-Cys-290 and Cys-307-Cys-338. The helical transmembrane segment at Ile-448–Gly-468 threads the bilayer. Topologically, residues Leu-469 to Ser-479 are cytoplasmic. Residues Phe-480–Ala-496 traverse the membrane as a helical segment.

Homodimer; in the endoplasmic reticulum and Golgi. N-glycosylated.

Its subcellular location is the virion membrane. The protein resides in the host endoplasmic reticulum membrane. Binds to host cell surface receptor and mediates fusion between viral and cellular membranes. Envelope protein is synthesized in the endoplasmic reticulum in the form of heterodimer with protein prM. They play a role in virion budding in the ER, and the newly formed immature particle is covered with 60 spikes composed of heterodimer between precursor prM and envelope protein E. The virion is transported to the Golgi apparatus where the low pH causes dissociation of PrM-E heterodimers and formation of E homodimers. prM-E cleavage is ineficient, and many virions are only partially matured. These uncleaved prM would play a role in immune evasion. This chain is Genome polyprotein, found in Bos taurus (Bovine).